The chain runs to 132 residues: Large-conductance mechanosensitive channel (132 aa).

A run of 2 helical transmembrane segments spans residues 14 to 34 (VIDL…VSSL) and 67 to 87 (GNFI…FMFV).

It belongs to the MscL family. As to quaternary structure, homopentamer.

The protein localises to the cell membrane. Functionally, channel that opens in response to stretch forces in the membrane lipid bilayer. May participate in the regulation of osmotic pressure changes within the cell. This is Large-conductance mechanosensitive channel from Bacillus cereus (strain AH820).